The chain runs to 403 residues: Soluble calcium-activated nucleotidase 1 (403 aa).

Topologically, residues 1–44 (MPIQPFDQREWNEPMHSLRISVGGLPVLASMTKATDPRFRPRWR) are cytoplasmic. The chain crosses the membrane as a helical; Signal-anchor for type II membrane protein span at residues 45–61 (VILTSFVGAALLWLLYS). Residues 62 to 403 (HHQTPVSGRP…SVKYEGIEFI (342 aa)) are Lumenal-facing. Asn-90 carries N-linked (GlcNAc...) asparagine glycosylation. Positions 170, 171, 217, 286, 347, and 398 each coordinate Ca(2+).

It belongs to the apyrase family. Monomer. Homodimer; dimerization is Ca(2+)-dependent. The cofactor is Ca(2+). In terms of tissue distribution, detected in intestine, thymus, heart, lung, spleen, kidney, liver, testis, skeletal muscle and brain.

The protein resides in the endoplasmic reticulum membrane. It localises to the golgi apparatus. Its subcellular location is the golgi stack membrane. The enzyme catalyses a ribonucleoside 5'-diphosphate + H2O = a ribonucleoside 5'-phosphate + phosphate + H(+). Functionally, calcium-dependent nucleotidase with a preference for UDP. The order of activity with different substrates is UDP &gt; GDP &gt; IDP &gt;&gt; UTP &gt; CDP = GTP = ITP. Has very low activity towards ADP and even lower activity towards ATP. Does not hydrolyze AMP and GMP. Involved in proteoglycan synthesis. This Rattus norvegicus (Rat) protein is Soluble calcium-activated nucleotidase 1 (Cant1).